The primary structure comprises 907 residues: Leucine-rich repeat-containing G-protein coupled receptor 5 (907 aa).

The signal sequence occupies residues 1-21 (MDTSRVRMLLSLLALLQLVAA). Topologically, residues 22–561 (GSPPRPDTMP…EHLFGSWLIR (540 aa)) are extracellular. The LRRNT domain occupies 33–64 (GCPSYCHCELDGRMLLRVDCSDLGLSELPSNL). 2 disulfides stabilise this stretch: C34-C40 and C38-C52. 17 LRR repeats span residues 44–64 (GRMLLRVDCSDLGLSELPSNL), 65–88 (SVFTSYLDLSMNNISQLPASLLHR), 89–112 (LRFLEELRLAGNALTHIPKGAFAG), 114–136 (HSLKVLMLQNNQLRQVPEEALQN), 137–160 (LRSLQSLRLDANHISYVPPSCFSG), 162–184 (HSLRHLWLDDNALTDVPVQAFRS), 186–208 (SALQAMTLALNKIHHIADHAFGN), 209–232 (LSSLVVLHLHNNRIHSLGKKCFDG), 233–256 (LHSLETLDLNYNNLDEFPTAIKTL), 257–279 (SNLKELGFHSNNIRSIPERAFVG), 281–303 (PSLITIHFYDNPIQFVGISAFQH), 304–327 (LPELRTLTLNGASQITEFPDLTGT), 328–350 (ATLESLTLTGAKISSLPQTVCDQ), 351–375 (LPNLQVLDLSYNLLEDLPSLSGCQK), 377–396 (QKIDLRHNEIYEIKGGTFQQ), 397–420 (LFNLRSLNLARNKIAIIHPNAFST), and 422–444 (PSLIKLDLSSNLLSSFPVTGLHG). Residues N63 and N77 are each glycosylated (N-linked (GlcNAc...) asparagine). N208 is a glycosylation site (N-linked (GlcNAc...) asparagine). Cysteines 348 and 373 form a disulfide. A disulfide bridge connects residues C479 and C541. Residues 562–582 (IGVWTTAVLALSCNALVAFTV) traverse the membrane as a helical segment. The LRR 18 repeat unit spans residues 564-585 (VWTTAVLALSCNALVAFTVFRT). Residues 583-595 (FRTPLYISSIKLL) are Cytoplasmic-facing. A helical membrane pass occupies residues 596 to 616 (IGVIAVVDILMGVSSAILAVV). Over 617–638 (DTFTFGSFAQHGAWWEGGIGCQ) the chain is Extracellular. The cysteines at positions 637 and 712 are disulfide-linked. A helical transmembrane segment spans residues 639–659 (IVGFLSIFASESSVFLLTLAA). Residues 660–682 (LERGFSVKCSSKFEMKAPLSSLK) lie on the Cytoplasmic side of the membrane. Residues 683 to 703 (AIILLCVLLALTIATVPLLGG) traverse the membrane as a helical segment. At 704-723 (SEYNASPLCLPLPFGEPSTT) the chain is on the extracellular side. The helical transmembrane segment at 724 to 744 (GYMVALVLLNSLCFLIMTIAY) threads the bilayer. Residues 745 to 775 (TRLYCSLEKGELENLWDCSMVKHTALLLFTN) lie on the Cytoplasmic side of the membrane. The chain crosses the membrane as a helical span at residues 776–796 (CILYCPVAFLSFSSLLNLTFI). Residues 797–802 (SPEVIK) are Extracellular-facing. The helical transmembrane segment at 803-823 (FILLVIVPLPACLNPLLYIVF) threads the bilayer. Residues 824–907 (NPHFKEDMGS…LSSVAFVPCL (84 aa)) are Cytoplasmic-facing.

Belongs to the G-protein coupled receptor 1 family. In terms of assembly, identified in a complex composed of RNF43, LGR5 and RSPO1. Also interacts with other R-spondin ligands, including RSPO2, RSPO3 and RSPO4.

It is found in the cell membrane. Its subcellular location is the golgi apparatus. The protein resides in the trans-Golgi network membrane. Its function is as follows. Receptor for R-spondins that potentiates the canonical Wnt signaling pathway and acts as a stem cell marker of the intestinal epithelium and the hair follicle. Upon binding to R-spondins (RSPO1, RSPO2, RSPO3 or RSPO4), associates with phosphorylated LRP6 and frizzled receptors that are activated by extracellular Wnt receptors, triggering the canonical Wnt signaling pathway to increase expression of target genes. In contrast to classical G-protein coupled receptors, does not activate heterotrimeric G-proteins to transduce the signal. Involved in the development and/or maintenance of the adult intestinal stem cells during postembryonic development. This is Leucine-rich repeat-containing G-protein coupled receptor 5 (Lgr5) from Rattus norvegicus (Rat).